Here is a 599-residue protein sequence, read N- to C-terminus: Aspartate--tRNA(Asp/Asn) ligase (599 aa).

Position 172 (Glu-172) interacts with L-aspartate. Positions 196–199 (QLFK) are aspartate. Arg-218 serves as a coordination point for L-aspartate. ATP is bound by residues 218–220 (RDE) and Gln-227. His-451 serves as a coordination point for L-aspartate. Residue Glu-485 coordinates ATP. Arg-492 is a binding site for L-aspartate. 537–540 (GLDR) lines the ATP pocket.

This sequence belongs to the class-II aminoacyl-tRNA synthetase family. Type 1 subfamily. In terms of assembly, homodimer.

Its subcellular location is the cytoplasm. It carries out the reaction tRNA(Asx) + L-aspartate + ATP = L-aspartyl-tRNA(Asx) + AMP + diphosphate. Aspartyl-tRNA synthetase with relaxed tRNA specificity since it is able to aspartylate not only its cognate tRNA(Asp) but also tRNA(Asn). Reaction proceeds in two steps: L-aspartate is first activated by ATP to form Asp-AMP and then transferred to the acceptor end of tRNA(Asp/Asn). This is Aspartate--tRNA(Asp/Asn) ligase from Aromatoleum aromaticum (strain DSM 19018 / LMG 30748 / EbN1) (Azoarcus sp. (strain EbN1)).